The following is a 257-amino-acid chain: Hydroxyethylthiazole kinase (257 aa).

M42 provides a ligand contact to substrate. Positions 117 and 163 each coordinate ATP. Substrate is bound at residue A190.

This sequence belongs to the Thz kinase family. It depends on Mg(2+) as a cofactor.

It catalyses the reaction 5-(2-hydroxyethyl)-4-methylthiazole + ATP = 4-methyl-5-(2-phosphooxyethyl)-thiazole + ADP + H(+). It functions in the pathway cofactor biosynthesis; thiamine diphosphate biosynthesis; 4-methyl-5-(2-phosphoethyl)-thiazole from 5-(2-hydroxyethyl)-4-methylthiazole: step 1/1. In terms of biological role, catalyzes the phosphorylation of the hydroxyl group of 4-methyl-5-beta-hydroxyethylthiazole (THZ). The sequence is that of Hydroxyethylthiazole kinase from Roseobacter denitrificans (strain ATCC 33942 / OCh 114) (Erythrobacter sp. (strain OCh 114)).